We begin with the raw amino-acid sequence, 346 residues long: uncharacterized protein (346 aa).

Positions 321 to 346 (TPWGTHSVAGVGPPPYARSGPASATT) are disordered.

This is an uncharacterized protein from Mycobacterium tuberculosis (strain CDC 1551 / Oshkosh).